A 587-amino-acid chain; its full sequence is Formate--tetrahydrofolate ligase (587 aa).

Position 73 to 80 (73 to 80) interacts with ATP; that stretch reads TPLGEGKS.

Belongs to the formate--tetrahydrofolate ligase family.

The catalysed reaction is (6S)-5,6,7,8-tetrahydrofolate + formate + ATP = (6R)-10-formyltetrahydrofolate + ADP + phosphate. Its pathway is one-carbon metabolism; tetrahydrofolate interconversion. The protein is Formate--tetrahydrofolate ligase of Desulfosudis oleivorans (strain DSM 6200 / JCM 39069 / Hxd3) (Desulfococcus oleovorans).